The sequence spans 1530 residues: Regulating synaptic membrane exocytosis protein 2 (1530 aa).

Residues 1 to 34 (MSAPLGPRGRPAPTPAASQPPPQPEMPDLSHLTE) form a disordered region. A compositionally biased stretch (pro residues) spans 10–25 (RPAPTPAASQPPPQPE). In terms of domain architecture, RabBD spans 26 to 194 (MPDLSHLTEE…TKSGAWFYNS (169 aa)). An FYVE-type zinc finger spans residues 126-182 (KGDAPTCGICHKTKFADGCGHNCSYCQTKFCARCGGRVSLRSNKVMWVCNLCRKQQE). Zn(2+)-binding residues include Cys132, Cys135, Cys148, Cys151, Cys156, Cys159, Cys174, and Cys177. Disordered stretches follow at residues 195-608 (GSNT…ERQK) and 632-655 (SGVD…HPVT). Basic and acidic residues-rich tracts occupy residues 210-225 (LRNE…KLHE), 327-338 (EPGHLNYRDSNR), 357-375 (RDEY…RYRS), 391-410 (EQMR…RHSD), and 419-443 (EDSR…RRAA). Ser409 carries the post-translational modification Phosphoserine. Over residues 458-472 (AQGQSSYPQRTSNHS) the composition is skewed to polar residues. Basic and acidic residues predominate over residues 484–501 (DRPDMRRADSLRKQHHLD). Polar residues predominate over residues 519 to 530 (RNDSLSSDQSES). Over residues 537–546 (RPHKSKKGGK) the composition is skewed to basic residues. Positions 567 to 577 (SCDDVELESES) are enriched in acidic residues. Basic and acidic residues-rich tracts occupy residues 578–592 (VSEK…RKTS) and 643–653 (NEEHSHSDKHP). The PDZ domain maps to 677–763 (DGSVPRDSGA…EPQVELVVSR (87 aa)). Thr698 bears the Phosphothreonine mark. The tract at residues 771–802 (IPDSTHAQLESSSSSFESQKMDRPSISVTSPM) is disordered. Phosphoserine is present on residues Ser800 and Ser803. The 124-residue stretch at 814–937 (LSGQLSIKLW…ALLDDEPHWY (124 aa)) folds into the C2 1 domain. 6 disordered regions span residues 948–982 (PLPR…SEVS), 1003–1122 (LQSS…ERSA), 1130–1149 (RQMK…RLEQ), 1154–1187 (KYRS…SRTS), 1242–1263 (SLEK…TSGK), and 1282–1307 (KSRS…QRST). Over residues 1003–1024 (LQSSTLSVPEQVMSSNHCSPSG) the composition is skewed to polar residues. Residues 1067 to 1086 (RMDRHRVMDDHYSSDRDRSH) are compositionally biased toward basic and acidic residues. Residues 1088–1101 (RTGSVQTSPSSTPG) show a composition bias toward polar residues. A Phosphoserine modification is found at Ser1095. The span at 1154–1165 (KYRSGWDPHRGA) shows a compositional bias: basic and acidic residues. Phosphoserine is present on Ser1175. The span at 1178 to 1187 (SDVSAVSRTS) shows a compositional bias: low complexity. A Phosphoserine modification is found at Ser1251. A C2 2 domain is found at 1376-1494 (AMGDIQVGMM…ELSNMVIGWF (119 aa)). 2 positions are modified to phosphoserine: Ser1515 and Ser1518.

In terms of assembly, interacts with TSPOAP1 and RIMBP2. Interacts with PPFIA3 and PPFIA4. Interacts via its zinc finger with the first C2 domain of UNC13A. Forms a complex consisting of UNC13A, RIMS2 and RAB3A. Heterodimer with PCLO. Part of a ternary complex involving PCLO and EPAC2. Interacts with RAB3A and RAB3B that have been activated by GTP-binding. Interacts with RAB3C, RAB3D and RAB26. As to expression, detected in testis, pituitary and an insulinoma cell line. Detected at low levels in cerebellar cortex.

It localises to the synapse. The protein resides in the synaptosome. Its function is as follows. Rab effector involved in exocytosis. May act as scaffold protein. Plays a role in dendrite formation by melanocytes. The sequence is that of Regulating synaptic membrane exocytosis protein 2 (Rims2) from Mus musculus (Mouse).